A 333-amino-acid polypeptide reads, in one-letter code: Cytochrome f (333 aa).

An N-terminal signal peptide occupies residues 1-44 (MRNASVTARLTRSVRAIVKTLLIAIATVTFYFSCDLALPQSAAA). Residues Tyr-45, Cys-66, Cys-69, and His-70 each coordinate heme. Residues 301–318 (GLIAFVALVMLAQVMLVL) traverse the membrane as a helical segment.

This sequence belongs to the cytochrome f family. As to quaternary structure, the 4 large subunits of the cytochrome b6-f complex are cytochrome b6, subunit IV (17 kDa polypeptide, PetD), cytochrome f and the Rieske protein, while the 4 small subunits are PetG, PetL, PetM and PetN. The complex functions as a dimer. The cofactor is heme.

It is found in the cellular thylakoid membrane. Functionally, component of the cytochrome b6-f complex, which mediates electron transfer between photosystem II (PSII) and photosystem I (PSI), cyclic electron flow around PSI, and state transitions. In Desmonostoc sp. (strain PCC 7906) (Nostoc sp. (strain PCC 7906)), this protein is Cytochrome f (petA).